A 563-amino-acid polypeptide reads, in one-letter code: Arginine--tRNA ligase (563 aa).

Residues 121 to 131 (PNIAKPFSIGH) carry the 'HIGH' region motif.

It belongs to the class-I aminoacyl-tRNA synthetase family. Monomer.

The protein resides in the cytoplasm. The enzyme catalyses tRNA(Arg) + L-arginine + ATP = L-arginyl-tRNA(Arg) + AMP + diphosphate. The chain is Arginine--tRNA ligase from Streptococcus pneumoniae (strain Hungary19A-6).